The following is a 274-amino-acid chain: 2,3,4,5-tetrahydropyridine-2,6-dicarboxylate N-succinyltransferase (274 aa).

Substrate is bound by residues arginine 104 and aspartate 141.

Belongs to the transferase hexapeptide repeat family. As to quaternary structure, homotrimer.

Its subcellular location is the cytoplasm. It catalyses the reaction (S)-2,3,4,5-tetrahydrodipicolinate + succinyl-CoA + H2O = (S)-2-succinylamino-6-oxoheptanedioate + CoA. It functions in the pathway amino-acid biosynthesis; L-lysine biosynthesis via DAP pathway; LL-2,6-diaminopimelate from (S)-tetrahydrodipicolinate (succinylase route): step 1/3. The chain is 2,3,4,5-tetrahydropyridine-2,6-dicarboxylate N-succinyltransferase from Yersinia enterocolitica serotype O:8 / biotype 1B (strain NCTC 13174 / 8081).